A 177-amino-acid polypeptide reads, in one-letter code: Archaemetzincin (177 aa).

Position 129 (histidine 129) interacts with Zn(2+). Catalysis depends on glutamate 130, which acts as the Proton acceptor. Zn(2+) is bound by residues histidine 133, histidine 139, cysteine 140, cysteine 145, cysteine 164, and cysteine 167.

The protein belongs to the peptidase M54 family. Monomer. The cofactor is Zn(2+).

Functionally, probable zinc metalloprotease whose natural substrate is unknown. This is Archaemetzincin from Sulfolobus acidocaldarius (strain ATCC 33909 / DSM 639 / JCM 8929 / NBRC 15157 / NCIMB 11770).